The sequence spans 38 residues: Mu-hexatoxin-Mg1b (38 aa).

3 disulfide bridges follow: Cys1/Cys15, Cys8/Cys20, and Cys14/Cys34. Position 38 is a serine amide (Ser38).

It belongs to the neurotoxin 14 (magi-1) family. 09 (magi-1) subfamily. In terms of tissue distribution, expressed by the venom gland.

It is found in the secreted. In terms of biological role, insecticidal neurotoxin. Shows competition for site 3 of insect voltage-gated sodium channels (Nav). This chain is Mu-hexatoxin-Mg1b, found in Macrothele gigas (Japanese funnel web spider).